We begin with the raw amino-acid sequence, 743 residues long: MADPGLRSGVGLPSQQGQKHDLQKDQKQPHVNNADRTTQSLLNSYIYDYLIKKDYCEAARAFGREAQVQTLVRSQEETNSLAKRHKRMSPVAVKHEGISNNESSDENMNVNNGNLDSFSSSSAPPPPPILPIDSAGGFLIEWWNVFWDIYNARRGQGSEPAKAYMSHISNLRKKSRLNLQEIQKNSLHTGNTSHPYANASFPHDPANAMGQQIDSSQFHQGAGGLNDRNQHLMRQAMLNNQSRETFPPTAAQLQQLKQLHYRQLQSVQQQQKQHQQKKTPQSGSTPQMQNTTSQPTTHDTHPPKQQGPISDFRSIPSSPKTEGAPSNAQFRPSLPATPNGSVPQSNPLYDTTGLNGGQYPVVQNSAQPLLHEINFASNRNPHLKQGGAVPSSTLPQQQKSLDKPKPAQQPSTGQFSGNQMNQYGFSNSPYSQNMLYNFNGNANPSRLNPALKNYMEELKLLEQQNKKRLLLVSQEKERKGYTSASPDRPLSQTITESSVAKTKSTTPKSTDTPTEATTSPVKVSTKNSNTTENLNGINESNMPMLQNGLPLRTSGDHPSNYSNLIENSSTSDTNNADNGMDVMGNWQLQQTHSSRPTPNASSPLDVRSKQKPSSANSNAPTPAPTVNTTNPESSTNEATSVGPALEPSQGANVHKSDSELDNQNQSGKSNPDTSATPSAPTESTTVATKSSDNQLLDVGNSTDIDAALLNDFDFDKFLKDTSTGDDLWFGLFNLPDNEDSTAA.

A disordered region spans residues 1 to 36 (MADPGLRSGVGLPSQQGQKHDLQKDQKQPHVNNADR). Positions 18 to 28 (QKHDLQKDQKQ) are enriched in basic and acidic residues. Residues 38–70 (TQSLLNSYIYDYLIKKDYCEAARAFGREAQVQT) form the LisH domain. 4 disordered regions span residues 79–127 (NSLA…PPPP), 264–361 (LQSV…QYPV), 379–426 (RNPH…YGFS), and 476–692 (KERK…KSSD). At Ser-89 the chain carries Phosphoserine. The segment covering 98-114 (ISNNESSDENMNVNNGN) has biased composition (polar residues). The span at 264–281 (LQSVQQQQKQHQQKKTPQ) shows a compositional bias: low complexity. 5 stretches are compositionally biased toward polar residues: residues 282–297 (SGST…QPTT), 315–353 (IPSS…DTTG), 390–399 (PSSTLPQQQK), 408–426 (QQPS…YGFS), and 482–500 (TSAS…SSVA). The span at 501 to 520 (KTKSTTPKSTDTPTEATTSP) shows a compositional bias: low complexity. Composition is skewed to polar residues over residues 521–544 (VKVS…NMPM) and 556–566 (DHPSNYSNLIE). Over residues 567–578 (NSSTSDTNNADN) the composition is skewed to low complexity. The span at 586-602 (WQLQQTHSSRPTPNASS) shows a compositional bias: polar residues. The span at 612–631 (PSSANSNAPTPAPTVNTTNP) shows a compositional bias: low complexity. The span at 661-670 (DNQNQSGKSN) shows a compositional bias: polar residues. The span at 671-688 (PDTSATPSAPTESTTVAT) shows a compositional bias: low complexity.

Belongs to the FLO8 family.

It localises to the cytoplasm. The protein resides in the nucleus. In terms of biological role, probable transcriptional regulator involved in cell adhesion. The sequence is that of Adhesion defective protein 2 (adn2) from Schizosaccharomyces pombe (strain 972 / ATCC 24843) (Fission yeast).